Reading from the N-terminus, the 2336-residue chain is RNA1 polyprotein (2336 aa).

Topologically, residues 599-1210 (QVARIARNIF…YLKEHGLEVL (612 aa)) are cytoplasmic. Residues 797 to 964 (MKDLLDLQQR…PGVVFDPMDC (168 aa)) form the SF3 helicase domain. Residue 827–834 (GPSHCGKS) participates in ATP binding. The chain crosses the membrane as a helical span at residues 1211 to 1231 (LLLAAMMILCVALYYFVGAFI). Residues 1232–1253 (GVMGGALSMGAAMAGLKEVDMK) are Lumenal-facing. A Peptidase C3 domain is found at 1278 to 1486 (YARGELDEEV…WADNLPNPCM (209 aa)). Active-site for picornain 3C-like protease activity residues include His-1320, Glu-1358, and Cys-1450. Residues 1771 to 1899 (DRAINCDYSS…SCTDKIAIYF (129 aa)) enclose the RdRp catalytic domain.

This sequence belongs to the nepoviruses RNA1 polyprotein family. In terms of processing, specific enzymatic cleavages by picornain 3C-like protease in vivo yield mature proteins. Picornain 3C-like protease is autocatalytically processed. Post-translationally, VPg is uridylylated by the polymerase and is covalently linked to the 5'-end of genomic RNA. This uridylylated form acts as a nucleotide-peptide primer for the polymerase.

It is found in the host endoplasmic reticulum lumen. The protein resides in the host endoplasmic reticulum membrane. The catalysed reaction is RNA(n) + a ribonucleoside 5'-triphosphate = RNA(n+1) + diphosphate. In terms of biological role, picornain 3C-like protease is a thiol protease that cleaves the P1 and P2 polyproteins. In Cycas necrotic stunt virus (CNSV), this protein is RNA1 polyprotein.